The sequence spans 485 residues: Homospermidine synthase (485 aa).

The protein belongs to the saccharopine dehydrogenase family. The cofactor is NAD(+).

The catalysed reaction is 2 putrescine = sym-homospermidine + NH4(+). It catalyses the reaction putrescine + spermidine = sym-homospermidine + propane-1,3-diamine. Its function is as follows. Involved in the NAD(+)-dependent synthesis of the polyamine homospermidine from putrescine. This Mesorhizobium japonicum (strain LMG 29417 / CECT 9101 / MAFF 303099) (Mesorhizobium loti (strain MAFF 303099)) protein is Homospermidine synthase (hss).